We begin with the raw amino-acid sequence, 1122 residues long: Adhesin P1 (1122 aa).

Positions methionine 1 to alanine 30 are cleaved as a signal peptide. Disordered stretches follow at residues alanine 183–valine 209, aspartate 244–threonine 273, and glutamine 544–glutamate 563. Over residues alanine 195–alanine 208 the composition is skewed to gly residues. The span at leucine 259 to threonine 273 shows a compositional bias: polar residues. A helical membrane pass occupies residues valine 997 to isoleucine 1021. The tract at residues lysine 1066 to glutamate 1122 is disordered. Over residues alanine 1079–glutamate 1122 the composition is skewed to low complexity.

This sequence belongs to the adhesin P1 family.

The protein localises to the cell membrane. In terms of biological role, could be involved in cytadherence. This Mycoplasmoides gallisepticum (Mycoplasma gallisepticum) protein is Adhesin P1 (gapA).